The chain runs to 481 residues: Glutamate--tRNA ligase 2 (481 aa).

A 'HIGH' region motif is present at residues 17 to 27; the sequence is PSPTGFLHIGG. Positions 118–139 are enriched in basic and acidic residues; that stretch reads AEQRAKKQPQRYDGRWRDRDPS. A disordered region spans residues 118 to 143; the sequence is AEQRAKKQPQRYDGRWRDRDPSEAPA. Residues 246 to 250 carry the 'KMSKS' region motif; the sequence is KLSKR. K249 is a binding site for ATP.

This sequence belongs to the class-I aminoacyl-tRNA synthetase family. Glutamate--tRNA ligase type 1 subfamily. In terms of assembly, monomer.

It localises to the cytoplasm. The enzyme catalyses tRNA(Glu) + L-glutamate + ATP = L-glutamyl-tRNA(Glu) + AMP + diphosphate. In terms of biological role, catalyzes the attachment of glutamate to tRNA(Glu) in a two-step reaction: glutamate is first activated by ATP to form Glu-AMP and then transferred to the acceptor end of tRNA(Glu). In Zymomonas mobilis subsp. mobilis (strain ATCC 31821 / ZM4 / CP4), this protein is Glutamate--tRNA ligase 2.